The following is a 217-amino-acid chain: Small ribosomal subunit protein uS3 (217 aa).

The 69-residue stretch at 38–106 (IRKFIDNELK…KVHINVIEIK (69 aa)) folds into the KH type-2 domain.

Belongs to the universal ribosomal protein uS3 family. In terms of assembly, part of the 30S ribosomal subunit. Forms a tight complex with proteins S10 and S14.

In terms of biological role, binds the lower part of the 30S subunit head. Binds mRNA in the 70S ribosome, positioning it for translation. The polypeptide is Small ribosomal subunit protein uS3 (Staphylococcus aureus (strain MSSA476)).